The primary structure comprises 657 residues: 1-deoxy-D-xylulose-5-phosphate synthase (657 aa).

H73 serves as a coordination point for thiamine diphosphate. Residues 91-110 form a disordered region; sequence RQEGGMSGYPDRGESEHDIV. Positions 101–110 are enriched in basic and acidic residues; the sequence is DRGESEHDIV. 113–115 serves as a coordination point for thiamine diphosphate; it reads SHA. D145 contacts Mg(2+). Thiamine diphosphate contacts are provided by residues 146–147, N175, Y293, and E375; that span reads GA. A Mg(2+)-binding site is contributed by N175.

It belongs to the transketolase family. DXPS subfamily. As to quaternary structure, homodimer. Requires Mg(2+) as cofactor. It depends on thiamine diphosphate as a cofactor.

The enzyme catalyses D-glyceraldehyde 3-phosphate + pyruvate + H(+) = 1-deoxy-D-xylulose 5-phosphate + CO2. It participates in metabolic intermediate biosynthesis; 1-deoxy-D-xylulose 5-phosphate biosynthesis; 1-deoxy-D-xylulose 5-phosphate from D-glyceraldehyde 3-phosphate and pyruvate: step 1/1. Functionally, catalyzes the acyloin condensation reaction between C atoms 2 and 3 of pyruvate and glyceraldehyde 3-phosphate to yield 1-deoxy-D-xylulose-5-phosphate (DXP). The polypeptide is 1-deoxy-D-xylulose-5-phosphate synthase (Arthrobacter sp. (strain FB24)).